Consider the following 57-residue polypeptide: DNA-directed RNA polymerase subunit Rpo6 (57 aa).

The protein belongs to the archaeal Rpo6/eukaryotic RPB6 RNA polymerase subunit family. In terms of assembly, part of the RNA polymerase complex.

The protein localises to the cytoplasm. The catalysed reaction is RNA(n) + a ribonucleoside 5'-triphosphate = RNA(n+1) + diphosphate. Functionally, DNA-dependent RNA polymerase (RNAP) catalyzes the transcription of DNA into RNA using the four ribonucleoside triphosphates as substrates. In Methanocaldococcus jannaschii (strain ATCC 43067 / DSM 2661 / JAL-1 / JCM 10045 / NBRC 100440) (Methanococcus jannaschii), this protein is DNA-directed RNA polymerase subunit Rpo6.